The primary structure comprises 168 residues: Acetone carboxylase gamma subunit (168 aa).

In terms of assembly, heterohexamer of two alpha, two beta and two gamma subunits. Fe cation serves as cofactor. Mg(2+) is required as a cofactor. It depends on Zn(2+) as a cofactor.

It catalyses the reaction acetone + hydrogencarbonate + 2 ATP + 3 H2O = acetoacetate + 2 AMP + 4 phosphate + 4 H(+). Its function is as follows. Catalyzes the carboxylation of acetone to form acetoacetate. Has a reduced activity on butanone, and no activity on 2-pentatone, 3-pentatone, 2-hexanone, chloroacetone, pyruvate, phosphoenolpyruvate, acetaldehyde, propionaldehyde and propylene oxide. This Xanthobacter autotrophicus (strain ATCC BAA-1158 / Py2) protein is Acetone carboxylase gamma subunit.